Reading from the N-terminus, the 426-residue chain is Anaerobic glycerol-3-phosphate dehydrogenase subunit B (426 aa).

This sequence belongs to the anaerobic G-3-P dehydrogenase subunit B family. In terms of assembly, composed of a catalytic GlpA/B dimer and of membrane bound GlpC. FMN is required as a cofactor.

The enzyme catalyses a quinone + sn-glycerol 3-phosphate = dihydroxyacetone phosphate + a quinol. The protein operates within polyol metabolism; glycerol degradation via glycerol kinase pathway; glycerone phosphate from sn-glycerol 3-phosphate (anaerobic route): step 1/1. In terms of biological role, conversion of glycerol 3-phosphate to dihydroxyacetone. Uses fumarate or nitrate as electron acceptor. This is Anaerobic glycerol-3-phosphate dehydrogenase subunit B from Haemophilus ducreyi (strain 35000HP / ATCC 700724).